The chain runs to 238 residues: DNA repair protein RecO (238 aa).

The protein belongs to the RecO family.

Involved in DNA repair and RecF pathway recombination. This Hahella chejuensis (strain KCTC 2396) protein is DNA repair protein RecO.